Here is a 214-residue protein sequence, read N- to C-terminus: Pyrophosphatase PpaX (214 aa).

The active-site Nucleophile is D9.

This sequence belongs to the HAD-like hydrolase superfamily. PpaX family. Mg(2+) is required as a cofactor.

The catalysed reaction is diphosphate + H2O = 2 phosphate + H(+). Hydrolyzes pyrophosphate formed during P-Ser-HPr dephosphorylation by HPrK/P. Might play a role in controlling the intracellular pyrophosphate pool. This Oceanobacillus iheyensis (strain DSM 14371 / CIP 107618 / JCM 11309 / KCTC 3954 / HTE831) protein is Pyrophosphatase PpaX.